Consider the following 394-residue polypeptide: GTPase Obg (394 aa).

In terms of domain architecture, Obg spans 5–163 (SNFVDYVKIY…RMVIMQLKML (159 aa)). The tract at residues 26 to 45 (HFRREKYIPKGGPDGGDGGR) is disordered. The OBG-type G domain maps to 164–330 (ADVGLVGFPN…LKDTLWKELS (167 aa)). GTP contacts are provided by residues 170–177 (GFPNAGKS), 195–199 (FTTLE), 217–220 (DIPG), 284–287 (TKCD), and 311–313 (SAV). Mg(2+)-binding residues include serine 177 and threonine 197.

The protein belongs to the TRAFAC class OBG-HflX-like GTPase superfamily. OBG GTPase family. Monomer. Requires Mg(2+) as cofactor.

It is found in the cytoplasm. An essential GTPase which binds GTP, GDP and possibly (p)ppGpp with moderate affinity, with high nucleotide exchange rates and a fairly low GTP hydrolysis rate. Plays a role in control of the cell cycle, stress response, ribosome biogenesis and in those bacteria that undergo differentiation, in morphogenesis control. In Porphyromonas gingivalis (strain ATCC 33277 / DSM 20709 / CIP 103683 / JCM 12257 / NCTC 11834 / 2561), this protein is GTPase Obg.